A 475-amino-acid chain; its full sequence is L-ornithine N(5)-monooxygenase (475 aa).

Residues 65-73 (ERQPEFGWH) and glutamine 84 contribute to the FAD site. Lysine 89 serves as a coordination point for substrate. Residue valine 150 participates in FAD binding. An NADP(+)-binding site is contributed by 238-241 (GGQS). Substrate-binding positions include 277-280 (NEIF) and asparagine 307. 307-309 (NYG) provides a ligand contact to NADP(+). 446–448 (SLL) serves as a coordination point for FAD. Serine 449 contacts substrate.

Belongs to the lysine N(6)-hydroxylase/L-ornithine N(5)-oxygenase family. As to quaternary structure, homotetramer. FAD is required as a cofactor.

It catalyses the reaction L-ornithine + NADPH + O2 = N(5)-hydroxy-L-ornithine + NADP(+) + H2O. It carries out the reaction L-ornithine + NADH + O2 = N(5)-hydroxy-L-ornithine + NAD(+) + H2O. It participates in siderophore biosynthesis. Its function is as follows. L-ornithine N(5)-monooxygenase; part of the gene cluster that mediates the biosynthesis of hydroxamate-containing siderophores that play a critical role in virulence via intracellular iron acquisition during macrophage infection. SID1 catalyzes the conversion of L-ornithine to N(5)-hydroxyornithine, the first step in the biosynthesis of all hydroxamate-containing siderophores. The sequence is that of L-ornithine N(5)-monooxygenase from Ajellomyces capsulatus (Darling's disease fungus).